A 1779-amino-acid chain; its full sequence is Fibronectin type III domain-containing protein 1 (1779 aa).

Positions 1-29 (MAPEARASPRLLLRAALLLLAALLPVASS) are cleaved as a signal peptide. 4 Fibronectin type-III domains span residues 33–126 (PVDH…KAPR), 103–203 (PNKP…AEED), 207–302 (VPED…TPES), and 307–402 (APEN…IPTT). Positions 400-413 (PTTSSTEASVQPNG) are enriched in polar residues. Disordered stretches follow at residues 400-442 (PTTS…MPPA), 459-1108 (NGVA…RNLD), 1120-1227 (EENT…KPNG), and 1330-1401 (PTTT…PPGT). Over residues 423–437 (QQPSSSAPKVAASSQ) the composition is skewed to low complexity. The segment covering 493 to 506 (NPRSSRLETLNQKQ) has biased composition (polar residues). Residues 534 to 554 (SRKEGMDRRGPSLDPHPHPRV) show a composition bias toward basic and acidic residues. 2 stretches are compositionally biased toward polar residues: residues 557–570 (SASSAYHQLSSTDN) and 590–607 (SSGSSPKNPGRSRPTSAP). Residues 629-640 (ASSSTSRQSHSS) show a composition bias toward low complexity. Position 651 is a phosphoserine (Ser651). Low complexity predominate over residues 676–694 (HASSSHTTSRTASSSHPSA). The residue at position 699 (Ser699) is a Phosphoserine. Basic and acidic residues predominate over residues 707 to 720 (DSDRAAEDTIRRAE). Composition is skewed to polar residues over residues 763-784 (PSVSPQSTSASKVLTRSPSLPA) and 861-875 (PLSSKAQGFQQSTTD). Low complexity predominate over residues 879–904 (PQTSPASTSRQPSPARPPASRSQPSP). 2 stretches are compositionally biased toward polar residues: residues 957 to 971 (APQNQNEGAQSTYED) and 1003 to 1020 (VGSQSWSSDNRPQPSQAG). Over residues 1085-1097 (LSTSVKKWPSSSS) the composition is skewed to low complexity. Residues 1098 to 1108 (PRDKYADRNLD) are compositionally biased toward basic and acidic residues. Composition is skewed to polar residues over residues 1147–1159 (NPATASPIANTHS) and 1166–1177 (RAPSSYSSTTPM). A compositionally biased stretch (low complexity) spans 1330–1389 (PTTTMPPSTTTTTVPPTTTLPPTTTTTRRTTTTRRTTTTRRPTTTTRATRRTTTTTTTPE). The 95-residue stretch at 1543–1637 (APRNITVVAM…PSVSFVTESD (95 aa)) folds into the Fibronectin type-III 5 domain. Asn1546 carries an N-linked (GlcNAc...) asparagine glycan.

The protein resides in the secreted. In terms of biological role, may be an activator of G protein signaling. This chain is Fibronectin type III domain-containing protein 1 (Fndc1), found in Rattus norvegicus (Rat).